Here is a 336-residue protein sequence, read N- to C-terminus: MMEATGLEGLESTSSPCPGSTGTGLSWDNGTRHNATFPEPLPALYVLLPVVYSVICAVGLVGNAAVICVILRAPKMKTVTHVFILNLAIADGLFTLVLPTNIAEHLLQRWPFGEVLCKLVLAIDHCNIFSSVYFLAAMSIDRYLVVLATARSRRMPRRTVHRAKVASLCVWLGVTVAVLPFLTFAGVYNNELQVTSCGLSFPRPERAWFQASRIYTLVLGFVVPMCTLCVLYADLLRRLRALRLHSGAKALGKAKRKVSLLVLAVLAVGLLCWTPFHLASIVALTTDLPQTPLVIIVSYVVTSLSYTSSCLNPFLYAFLDHSFRKSLRTACRCQGA.

A disordered region spans residues 1-25 (MMEATGLEGLESTSSPCPGSTGTGL). At 1-45 (MMEATGLEGLESTSSPCPGSTGTGLSWDNGTRHNATFPEPLPALY) the chain is on the extracellular side. Positions 12-25 (STSSPCPGSTGTGL) are enriched in low complexity. N-linked (GlcNAc...) asparagine glycans are attached at residues asparagine 29 and asparagine 34. A helical transmembrane segment spans residues 46 to 68 (VLLPVVYSVICAVGLVGNAAVIC). Topologically, residues 69 to 80 (VILRAPKMKTVT) are cytoplasmic. Residues 81–103 (HVFILNLAIADGLFTLVLPTNIA) form a helical membrane-spanning segment. At 104–127 (EHLLQRWPFGEVLCKLVLAIDHCN) the chain is on the extracellular side. A disulfide bridge links cysteine 117 with cysteine 197. A helical membrane pass occupies residues 128 to 146 (IFSSVYFLAAMSIDRYLVV). Topologically, residues 147–165 (LATARSRRMPRRTVHRAKV) are cytoplasmic. The helical transmembrane segment at 166–188 (ASLCVWLGVTVAVLPFLTFAGVY) threads the bilayer. Residues 189 to 213 (NNELQVTSCGLSFPRPERAWFQASR) are Extracellular-facing. Residues 214-236 (IYTLVLGFVVPMCTLCVLYADLL) form a helical membrane-spanning segment. Residues 237–256 (RRLRALRLHSGAKALGKAKR) lie on the Cytoplasmic side of the membrane. The chain crosses the membrane as a helical span at residues 257 to 279 (KVSLLVLAVLAVGLLCWTPFHLA). The Extracellular segment spans residues 280 to 293 (SIVALTTDLPQTPL). The chain crosses the membrane as a helical span at residues 294 to 316 (VIIVSYVVTSLSYTSSCLNPFLY). Residues 317–336 (AFLDHSFRKSLRTACRCQGA) are Cytoplasmic-facing.

The protein belongs to the G-protein coupled receptor 1 family.

The protein localises to the cell membrane. Functionally, interacts specifically with a number of opioid ligands. Receptor for neuropeptides B and W, which may be involved in neuroendocrine system regulation, food intake and the organization of other signals. In Bos taurus (Bovine), this protein is Neuropeptides B/W receptor type 2 (NPBWR2).